Consider the following 294-residue polypeptide: UDP-3-O-acyl-N-acetylglucosamine deacetylase (294 aa).

Positions 75, 232, and 236 each coordinate Zn(2+). Residue His-259 is the Proton donor of the active site.

Belongs to the LpxC family. Zn(2+) is required as a cofactor.

It catalyses the reaction a UDP-3-O-[(3R)-3-hydroxyacyl]-N-acetyl-alpha-D-glucosamine + H2O = a UDP-3-O-[(3R)-3-hydroxyacyl]-alpha-D-glucosamine + acetate. It functions in the pathway glycolipid biosynthesis; lipid IV(A) biosynthesis; lipid IV(A) from (3R)-3-hydroxytetradecanoyl-[acyl-carrier-protein] and UDP-N-acetyl-alpha-D-glucosamine: step 2/6. Catalyzes the hydrolysis of UDP-3-O-myristoyl-N-acetylglucosamine to form UDP-3-O-myristoylglucosamine and acetate, the committed step in lipid A biosynthesis. This Campylobacter fetus subsp. fetus (strain 82-40) protein is UDP-3-O-acyl-N-acetylglucosamine deacetylase.